The sequence spans 366 residues: UDP-N-acetylglucosamine--N-acetylmuramyl-(pentapeptide) pyrophosphoryl-undecaprenol N-acetylglucosamine transferase (366 aa).

Residues 22–24, Asn134, Arg170, Ser198, Ile253, and Gln298 each bind UDP-N-acetyl-alpha-D-glucosamine; that span reads TGG.

Belongs to the glycosyltransferase 28 family. MurG subfamily.

Its subcellular location is the cell inner membrane. The enzyme catalyses di-trans,octa-cis-undecaprenyl diphospho-N-acetyl-alpha-D-muramoyl-L-alanyl-D-glutamyl-meso-2,6-diaminopimeloyl-D-alanyl-D-alanine + UDP-N-acetyl-alpha-D-glucosamine = di-trans,octa-cis-undecaprenyl diphospho-[N-acetyl-alpha-D-glucosaminyl-(1-&gt;4)]-N-acetyl-alpha-D-muramoyl-L-alanyl-D-glutamyl-meso-2,6-diaminopimeloyl-D-alanyl-D-alanine + UDP + H(+). It functions in the pathway cell wall biogenesis; peptidoglycan biosynthesis. Functionally, cell wall formation. Catalyzes the transfer of a GlcNAc subunit on undecaprenyl-pyrophosphoryl-MurNAc-pentapeptide (lipid intermediate I) to form undecaprenyl-pyrophosphoryl-MurNAc-(pentapeptide)GlcNAc (lipid intermediate II). This Xylella fastidiosa (strain M12) protein is UDP-N-acetylglucosamine--N-acetylmuramyl-(pentapeptide) pyrophosphoryl-undecaprenol N-acetylglucosamine transferase.